The following is a 451-amino-acid chain: Macrophage scavenger receptor types I and II (451 aa).

The Cytoplasmic portion of the chain corresponds to methionine 1–lysine 50. Serine 27 is modified (phosphoserine). Residues alanine 51 to leucine 76 traverse the membrane as a helical; Signal-anchor for type II membrane protein segment. The spacer stretch occupies residues lysine 77–arginine 109. Topologically, residues lysine 77 to leucine 451 are extracellular. Residues asparagine 82, asparagine 102, asparagine 143, asparagine 184, asparagine 221, asparagine 249, and asparagine 267 are each glycosylated (N-linked (GlcNAc...) asparagine). Residues asparagine 171–arginine 255 adopt a coiled-coil conformation. Positions asparagine 267–proline 346 are disordered. In terms of domain architecture, Collagen-like spans glycine 273–glycine 341. Positions valine 350–threonine 450 constitute an SRCR domain. Cystine bridges form between cysteine 375–cysteine 439, cysteine 388–cysteine 449, and cysteine 419–cysteine 429.

Homotrimer. Interacts with MYO18A. In terms of tissue distribution, isoform I, isoform II and isoform III are expressed in monocyte-derived macrophages. Isoform I and isoform II are expressed in the liver, placenta and brain.

Its subcellular location is the membrane. Its function is as follows. Membrane glycoproteins implicated in the pathologic deposition of cholesterol in arterial walls during atherogenesis. Two types of receptor subunits exist. These receptors mediate the endocytosis of a diverse group of macromolecules, including modified low density lipoproteins (LDL). Isoform III does not internalize acetylated LDL. In Homo sapiens (Human), this protein is Macrophage scavenger receptor types I and II (MSR1).